The chain runs to 115 residues: U3-lycotoxin-Ls1p (115 aa).

The N-terminal stretch at 1–20 is a signal peptide; the sequence is MKFVLLFGVLLVTLFSYSSA. Residues 21–44 constitute a propeptide that is removed on maturation; the sequence is EMFDDFDQADEDELLSLIEKEEAR. Intrachain disulfides connect Cys48–Cys63, Cys55–Cys72, Cys62–Cys87, and Cys74–Cys85.

It belongs to the neurotoxin 19 (CSTX) family. 01 subfamily. Expressed by the venom gland.

The protein resides in the secreted. The chain is U3-lycotoxin-Ls1p from Lycosa singoriensis (Wolf spider).